The following is a 199-amino-acid chain: Shikimate kinase (199 aa).

12–17 is an ATP binding site; the sequence is GAGKST. Residue Ser16 participates in Mg(2+) binding. 3 residues coordinate substrate: Asp34, Arg58, and Gly80. Residue Arg117 participates in ATP binding. A substrate-binding site is contributed by Arg136. The disordered stretch occupies residues 174–199; the sequence is VSGGDRKSSEAERSGAPLRKSSEVVK. A compositionally biased stretch (basic and acidic residues) spans 177–186; the sequence is GDRKSSEAER.

The protein belongs to the shikimate kinase family. Monomer. Mg(2+) serves as cofactor.

The protein resides in the cytoplasm. The enzyme catalyses shikimate + ATP = 3-phosphoshikimate + ADP + H(+). It participates in metabolic intermediate biosynthesis; chorismate biosynthesis; chorismate from D-erythrose 4-phosphate and phosphoenolpyruvate: step 5/7. In terms of biological role, catalyzes the specific phosphorylation of the 3-hydroxyl group of shikimic acid using ATP as a cosubstrate. The sequence is that of Shikimate kinase from Mycobacterium leprae (strain TN).